Reading from the N-terminus, the 211-residue chain is ATP phosphoribosyltransferase (211 aa).

The protein belongs to the ATP phosphoribosyltransferase family. Short subfamily. Heteromultimer composed of HisG and HisZ subunits.

The protein localises to the cytoplasm. It catalyses the reaction 1-(5-phospho-beta-D-ribosyl)-ATP + diphosphate = 5-phospho-alpha-D-ribose 1-diphosphate + ATP. It participates in amino-acid biosynthesis; L-histidine biosynthesis; L-histidine from 5-phospho-alpha-D-ribose 1-diphosphate: step 1/9. Its function is as follows. Catalyzes the condensation of ATP and 5-phosphoribose 1-diphosphate to form N'-(5'-phosphoribosyl)-ATP (PR-ATP). Has a crucial role in the pathway because the rate of histidine biosynthesis seems to be controlled primarily by regulation of HisG enzymatic activity. The protein is ATP phosphoribosyltransferase of Rippkaea orientalis (strain PCC 8801 / RF-1) (Cyanothece sp. (strain PCC 8801)).